The sequence spans 367 residues: MLRPIITLLCLTLMLCTAAGPAGATRIKDIARLQGVRSNQLVGYGLVVGLNGSGDSDSTAFTVRSLVNMMERLGVTVDVNDVKVDNVAAVIVTAELPAFSKTGSTIDVLVSSIGDADSLVGGSLLMTPLKGADGKIYAVAQGPLAVGALAFGGKAATVQKNHPTVGRIPGGALVEREVPFRLTPGAELHYQLTNPDFTTVTRMAQAINKHFQKTLARAEDSGSLKITIPEDQQNEPIHFIADLESLNIRPDSMARIVVNEKTGTIVMGEDVRIATVAVSHGNLNLIISENDQVSQPLPFSEGETVVVPDTSMEVSEDNGNLVVMEMGVSIGDVARALNAIGATPRDLIAIFQAIKAAGALHAELVVL.

Positions 1-24 (MLRPIITLLCLTLMLCTAAGPAGA) are cleaved as a signal peptide.

The protein belongs to the FlgI family. In terms of assembly, the basal body constitutes a major portion of the flagellar organelle and consists of four rings (L,P,S, and M) mounted on a central rod.

It localises to the periplasm. The protein localises to the bacterial flagellum basal body. Assembles around the rod to form the L-ring and probably protects the motor/basal body from shearing forces during rotation. The protein is Flagellar P-ring protein of Syntrophotalea carbinolica (strain DSM 2380 / NBRC 103641 / GraBd1) (Pelobacter carbinolicus).